The following is a 262-amino-acid chain: Small ribosomal subunit protein eS4 (262 aa).

The S4 RNA-binding domain maps to 42 to 105; sequence LPLVVFLRNR…NEHFRLVYDV (64 aa). The KOW domain occupies 178 to 211; the sequence is GRLVMVTGGRNLGRVGVIVHREKHEGGFDLVHIK.

It belongs to the eukaryotic ribosomal protein eS4 family. As to quaternary structure, component of the small ribosomal subunit. Mature ribosomes consist of a small (40S) and a large (60S) subunit. The 40S subunit contains about 32 different proteins and 1 molecule of RNA (18S). The 60S subunit contains 45 different proteins and 3 molecules of RNA (25S, 5.8S and 5S).

It is found in the cytoplasm. Functionally, component of the ribosome, a large ribonucleoprotein complex responsible for the synthesis of proteins in the cell. The small ribosomal subunit (SSU) binds messenger RNAs (mRNAs) and translates the encoded message by selecting cognate aminoacyl-transfer RNA (tRNA) molecules. The large subunit (LSU) contains the ribosomal catalytic site termed the peptidyl transferase center (PTC), which catalyzes the formation of peptide bonds, thereby polymerizing the amino acids delivered by tRNAs into a polypeptide chain. The nascent polypeptides leave the ribosome through a tunnel in the LSU and interact with protein factors that function in enzymatic processing, targeting, and the membrane insertion of nascent chains at the exit of the ribosomal tunnel. This Candida albicans (strain SC5314 / ATCC MYA-2876) (Yeast) protein is Small ribosomal subunit protein eS4 (RPS42).